The following is a 493-amino-acid chain: 3-octaprenyl-4-hydroxybenzoate carboxy-lyase (493 aa).

Residue Asn172 coordinates Mn(2+). Prenylated FMN is bound by residues 175-177, 189-191, and 194-195; these read IYR, RWL, and RG. A Mn(2+)-binding site is contributed by Glu238. Asp287 functions as the Proton donor in the catalytic mechanism.

Belongs to the UbiD family. In terms of assembly, homohexamer. Prenylated FMN serves as cofactor. Requires Mn(2+) as cofactor.

It localises to the cell membrane. It catalyses the reaction a 4-hydroxy-3-(all-trans-polyprenyl)benzoate + H(+) = a 2-(all-trans-polyprenyl)phenol + CO2. It participates in cofactor biosynthesis; ubiquinone biosynthesis. Catalyzes the decarboxylation of 3-octaprenyl-4-hydroxy benzoate to 2-octaprenylphenol, an intermediate step in ubiquinone biosynthesis. This Shewanella pealeana (strain ATCC 700345 / ANG-SQ1) protein is 3-octaprenyl-4-hydroxybenzoate carboxy-lyase.